The following is a 179-amino-acid chain: Large ribosomal subunit protein uL10 (179 aa).

Belongs to the universal ribosomal protein uL10 family. As to quaternary structure, part of the ribosomal stalk of the 50S ribosomal subunit. The N-terminus interacts with L11 and the large rRNA to form the base of the stalk. The C-terminus forms an elongated spine to which L12 dimers bind in a sequential fashion forming a multimeric L10(L12)X complex.

Functionally, forms part of the ribosomal stalk, playing a central role in the interaction of the ribosome with GTP-bound translation factors. In Kosmotoga olearia (strain ATCC BAA-1733 / DSM 21960 / TBF 19.5.1), this protein is Large ribosomal subunit protein uL10.